Reading from the N-terminus, the 154-residue chain is Protein disulfide-isomerase LQY1, chloroplastic (154 aa).

A chloroplast-targeting transit peptide spans 1–43 (MPVSAPSPPRLHSPFIHCPINFTPSSFSARNLRSPSTSYPRIK). Residues 51–71 (VVAISVGVASVALGIGIPVFY) traverse the membrane as a helical segment. The segment at 77-147 (NAAKRENTQP…SGVQPRYLDR (71 aa)) adopts a CR-type zinc-finger fold. Residues cysteine 87, cysteine 90, cysteine 98, cysteine 101, cysteine 121, cysteine 124, cysteine 132, and cysteine 135 each contribute to the Zn(2+) site.

The protein belongs to the BSD2 chaperone family. As to quaternary structure, interacts with the photosystem II core subunits. Interacts with HHL1. Requires Zn(2+) as cofactor.

The protein resides in the plastid. It is found in the chloroplast thylakoid membrane. The enzyme catalyses Catalyzes the rearrangement of -S-S- bonds in proteins.. Its function is as follows. Protein disulfide-isomerase probably involved upon formation of a complex with HHL1 in maintaining photosystem II (PSII) activity under high light by regulating repair and reassembly of PSII complexes. The chain is Protein disulfide-isomerase LQY1, chloroplastic from Arabidopsis thaliana (Mouse-ear cress).